A 100-amino-acid chain; its full sequence is Urease subunit gamma (100 aa).

It belongs to the urease gamma subunit family. Heterotrimer of UreA (gamma), UreB (beta) and UreC (alpha) subunits. Three heterotrimers associate to form the active enzyme.

The protein resides in the cytoplasm. The enzyme catalyses urea + 2 H2O + H(+) = hydrogencarbonate + 2 NH4(+). It participates in nitrogen metabolism; urea degradation; CO(2) and NH(3) from urea (urease route): step 1/1. This chain is Urease subunit gamma, found in Staphylococcus xylosus.